A 596-amino-acid chain; its full sequence is Beta-fructofuranosidase, insoluble isoenzyme 6 (596 aa).

The first 25 residues, 1-25 (MALAGLPLSVFAIAVHFCLVFSSSS), serve as a signal peptide directing secretion. Substrate-binding positions include 49 to 52 (WQND), Gln68, and Trp76. Asp52 is an active-site residue. N-linked (GlcNAc...) asparagine glycosylation occurs at Asn80. Substrate contacts are provided by residues 113–114 (AS), 177–178 (RD), and Glu232. Asn335 carries an N-linked (GlcNAc...) asparagine glycan. The cysteines at positions 436 and 482 are disulfide-linked. Asn556 carries N-linked (GlcNAc...) asparagine glycosylation.

It belongs to the glycosyl hydrolase 32 family. In terms of tissue distribution, expressed in roots. Weakly expressed in flowers.

Its subcellular location is the secreted. The protein resides in the extracellular space. It is found in the apoplast. The protein localises to the cell wall. It catalyses the reaction Hydrolysis of terminal non-reducing beta-D-fructofuranoside residues in beta-D-fructofuranosides.. This Oryza sativa subsp. japonica (Rice) protein is Beta-fructofuranosidase, insoluble isoenzyme 6 (CIN6).